The sequence spans 564 residues: Dihydroxy-acid dehydratase 2 (564 aa).

Residue C59 participates in [2Fe-2S] cluster binding. D91 is a Mg(2+) binding site. C132 provides a ligand contact to [2Fe-2S] cluster. Mg(2+) is bound by residues D133 and K134. K134 is modified (N6-carboxylysine). C204 is a binding site for [2Fe-2S] cluster. Residue E454 coordinates Mg(2+). Catalysis depends on S480, which acts as the Proton acceptor.

This sequence belongs to the IlvD/Edd family. Homodimer. [2Fe-2S] cluster is required as a cofactor. Mg(2+) serves as cofactor.

The enzyme catalyses (2R)-2,3-dihydroxy-3-methylbutanoate = 3-methyl-2-oxobutanoate + H2O. The catalysed reaction is (2R,3R)-2,3-dihydroxy-3-methylpentanoate = (S)-3-methyl-2-oxopentanoate + H2O. Its pathway is amino-acid biosynthesis; L-isoleucine biosynthesis; L-isoleucine from 2-oxobutanoate: step 3/4. It participates in amino-acid biosynthesis; L-valine biosynthesis; L-valine from pyruvate: step 3/4. Its function is as follows. Functions in the biosynthesis of branched-chain amino acids. Catalyzes the dehydration of (2R,3R)-2,3-dihydroxy-3-methylpentanoate (2,3-dihydroxy-3-methylvalerate) into 2-oxo-3-methylpentanoate (2-oxo-3-methylvalerate) and of (2R)-2,3-dihydroxy-3-methylbutanoate (2,3-dihydroxyisovalerate) into 2-oxo-3-methylbutanoate (2-oxoisovalerate), the penultimate precursor to L-isoleucine and L-valine, respectively. The chain is Dihydroxy-acid dehydratase 2 from Staphylococcus saprophyticus subsp. saprophyticus (strain ATCC 15305 / DSM 20229 / NCIMB 8711 / NCTC 7292 / S-41).